Consider the following 1342-residue polypeptide: Receptor tyrosine-protein kinase erbB-3 (1342 aa).

The signal sequence occupies residues 1–19 (MRANDALQVLGLLFSLARG). Residues 20–643 (SEVGNSQAVC…LVLIGKTHLT (624 aa)) are Extracellular-facing. A disulfide bond links cysteine 29 and cysteine 56. Asparagine 126 is a glycosylation site (N-linked (GlcNAc...) asparagine). 12 disulfide bridges follow: cysteine 156-cysteine 183, cysteine 186-cysteine 194, cysteine 190-cysteine 202, cysteine 210-cysteine 218, cysteine 214-cysteine 226, cysteine 227-cysteine 235, cysteine 231-cysteine 243, cysteine 246-cysteine 255, cysteine 259-cysteine 286, cysteine 290-cysteine 301, cysteine 305-cysteine 320, and cysteine 323-cysteine 327. The N-linked (GlcNAc...) asparagine glycan is linked to asparagine 250. 5 N-linked (GlcNAc...) asparagine glycosylation sites follow: asparagine 353, asparagine 408, asparagine 414, asparagine 437, and asparagine 469. Intrachain disulfides connect cysteine 500/cysteine 509, cysteine 504/cysteine 517, cysteine 520/cysteine 529, cysteine 533/cysteine 549, cysteine 552/cysteine 565, cysteine 556/cysteine 573, cysteine 576/cysteine 585, cysteine 589/cysteine 610, cysteine 613/cysteine 621, and cysteine 617/cysteine 629. Residue asparagine 522 is glycosylated (N-linked (GlcNAc...) asparagine). N-linked (GlcNAc...) asparagine glycosylation occurs at asparagine 566. An N-linked (GlcNAc...) asparagine glycan is attached at asparagine 616. Residues 644–664 (MALTVIAGLVVIFMMLGGTFL) traverse the membrane as a helical segment. Topologically, residues 665–1342 (YWRGRRIQNK…LFPKANAQRT (678 aa)) are cytoplasmic. Serine 686 bears the Phosphoserine mark. The region spanning 709-966 (LRKLKVLGSG…TFKELANEFT (258 aa)) is the Protein kinase domain. ATP-binding positions include 715–723 (LGSGVFGTV), lysine 742, 788–790 (QYL), and 834–839 (NLAARN). The active-site Proton acceptor is the asparagine 834. Disordered stretches follow at residues 980–999 (RESG…TNKK) and 1033–1152 (LPVG…PGLE). Residue serine 982 is modified to Phosphoserine. Positions 1042 to 1075 (RGSQSLLSPSSGYMPMNQGNLGESCQESAVSGSS) are enriched in polar residues.

Belongs to the protein kinase superfamily. Tyr protein kinase family. EGF receptor subfamily. In terms of assembly, monomer and homodimer. Heterodimer with each of the other ERBB receptors (Potential). Interacts with CSPG5. Interacts with GRB7. Interacts with MUC1. Interacts with MYOC. Interacts with isoform 2 of PA2G4. Found in a ternary complex with NRG1 and ITGAV:ITGB3 or ITGA6:ITGB4. Autophosphorylated. Ligand-binding increases phosphorylation on tyrosine residues and promotes its association with the p85 subunit of phosphatidylinositol 3-kinase. In terms of tissue distribution, epithelial tissues and brain.

Its subcellular location is the cell membrane. It localises to the secreted. It catalyses the reaction L-tyrosyl-[protein] + ATP = O-phospho-L-tyrosyl-[protein] + ADP + H(+). In terms of biological role, tyrosine-protein kinase that plays an essential role as cell surface receptor for neuregulins. Binds to neuregulin-1 (NRG1) and is activated by it; ligand-binding increases phosphorylation on tyrosine residues and promotes its association with the p85 subunit of phosphatidylinositol 3-kinase. May also be activated by CSPG5. Involved in the regulation of myeloid cell differentiation. In Homo sapiens (Human), this protein is Receptor tyrosine-protein kinase erbB-3 (ERBB3).